Reading from the N-terminus, the 496-residue chain is Adenosine transporter 1 (496 aa).

The Cytoplasmic segment spans residues 1–26; the sequence is MSSHTSTPNHASAAPPRKWYDMTSAE. Residues 27–47 form a helical membrane-spanning segment; sequence FYVYVVAFMCGISMLMPINAV. Over 48–77 the chain is Extracellular; it reads FSAPSYMLQYYLYATKDPNHVPQMTNFWSN. A helical membrane pass occupies residues 78-98; it reads VMTYYNLIGLVTGLVMEPLTL. At 99–107 the chain is on the cytoplasmic side; that stretch reads LKSFRKIPM. A helical transmembrane segment spans residues 108 to 128; that stretch reads LVRLLGGLCILIVEIIVLMAV. Over 129–135 the chain is Extracellular; sequence PARGTTE. The chain crosses the membrane as a helical span at residues 136–156; that stretch reads GGAVATMCIAGFIGGLGKSIF. Over 157 to 172 the chain is Cytoplasmic; it reads ESTVYGMFGAFPPSFT. The chain crosses the membrane as a helical span at residues 173–193; sequence SIMMGGVGISGVLTSLIQIIV. Over 194 to 208 the chain is Extracellular; sequence KAALPDTYEGVKKQS. A helical transmembrane segment spans residues 209–229; it reads YIYYSLDVGIQAATFIALIMM. The Cytoplasmic segment spans residues 230–336; the sequence is RFNSFAQLHF…SIISVLRSIK (107 aa). The chain crosses the membrane as a helical span at residues 337–357; the sequence is WMFVSCAFVFVVTLFLFPGIA. The Extracellular segment spans residues 358–365; it reads TGMFPESK. Residues 366 to 386 traverse the membrane as a helical segment; it reads WFATVAVFIFNCCDVLGRVAP. The Cytoplasmic portion of the chain corresponds to 387–399; it reads ALRFMWPRSYNQR. Residues 400–420 traverse the membrane as a helical segment; that stretch reads WIIVAASFARVIFVPLLLLYS. At 421-431 the chain is on the extracellular side; that stretch reads YHYIPSEAYGY. Residues 432 to 452 form a helical membrane-spanning segment; that stretch reads VIMVIFGFSSGYVASMSLTLG. Over 453–464 the chain is Cytoplasmic; sequence PQSKGIDNDGKR. A helical membrane pass occupies residues 465–485; sequence FVAGTLMGISILVGGTIGTVL. Residues 486–496 lie on the Extracellular side of the membrane; the sequence is SIMTQTIREKY.

Belongs to the SLC29A/ENT transporter (TC 2.A.57) family.

Its subcellular location is the membrane. The enzyme catalyses adenosine(in) = adenosine(out). In terms of biological role, adenosine transporter. The sequence is that of Adenosine transporter 1 from Crithidia fasciculata.